The chain runs to 438 residues: Enolase (438 aa).

The substrate site is built by histidine 159 and glutamate 168. The active-site Proton donor is the glutamate 211. Residues aspartate 246, glutamate 297, and aspartate 322 each coordinate Mg(2+). The substrate site is built by glutamate 297 and aspartate 322. Residue lysine 347 is the Proton acceptor of the active site. Residues 374–377 and lysine 398 contribute to the substrate site; that span reads SHRS.

Belongs to the enolase family. In terms of assembly, homodimer. The cofactor is Mg(2+).

The protein localises to the cytoplasm. It catalyses the reaction (2R)-2-phosphoglycerate = phosphoenolpyruvate + H2O. Its pathway is carbohydrate degradation; glycolysis; pyruvate from D-glyceraldehyde 3-phosphate: step 4/5. Its function is as follows. Involved in osmoadaptation. This is Enolase (enoA) from Emericella nidulans (strain FGSC A4 / ATCC 38163 / CBS 112.46 / NRRL 194 / M139) (Aspergillus nidulans).